The primary structure comprises 1036 residues: KAT8 regulatory NSL complex subunit 1 (1036 aa).

Lys104 bears the N6-acetyllysine mark. Disordered regions lie at residues 145–211 (GQTA…CTLP) and 226–257 (NSTANKSSVNSMDQPALQGSSRLSPSTDSSSN). Positions 226 to 244 (NSTANKSSVNSMDQPALQG) are enriched in polar residues. A compositionally biased stretch (low complexity) spans 245–256 (SSRLSPSTDSSS). Ser249 carries the phosphoserine modification. Lys262 participates in a covalent cross-link: Glycyl lysine isopeptide (Lys-Gly) (interchain with G-Cter in SUMO2). Ser268 carries the post-translational modification Phosphoserine. Positions 285–312 (TALLRRQADIEIRARRLQKRLQVVQAKQ) form a coiled coil. Lys331 is covalently cross-linked (Glycyl lysine isopeptide (Lys-Gly) (interchain with G-Cter in SUMO2)). Disordered regions lie at residues 399-423 (DSDVTDSSSGGESDIEEEELTRADP) and 739-787 (SPSY…RRRG). Over residues 759–772 (STSSDTSTPTSSGS) the composition is skewed to low complexity. Residues 781 to 813 (PVRRRRGESSFDINNIVIPMSVAATTRVEKLQY) are required for activation of KAT8 histone acetyltransferase activity. The 152-residue stretch at 815–966 (EILTPSWREV…GLDEQSVQPW (152 aa)) folds into the PEHE domain. The interval 841–859 (EDLSDAAFAALHAKCEEME) is interaction with KAT8 HAT domain. Positions 869-931 (VPPQRRGSRS…SPISPELHSA (63 aa)) are disordered. Polar residues predominate over residues 886–896 (TTPQLGSANPS). Residues 906-919 (SSSHSLSEFSHGQS) are compositionally biased toward low complexity. Phosphoserine occurs at positions 922 and 925. Thr934 carries the phosphothreonine modification. Ser976 is modified (phosphoserine). The tract at residues 989 to 1020 (DTAARCTRRTSGSKTGREAEVAPTSPPVVPLK) is disordered.

In terms of assembly, component of the NSL complex at least composed of MOF/KAT8, KANSL1, KANSL2, KANSL3, MCRS1, PHF20, OGT1/OGT, WDR5 and HCFC1. Interacts (via PEHE domain) with KAT8 (via HAT domain); the interaction is direct. Component of some MLL1/MLL complex, at least composed of the core components KMT2A/MLL1, ASH2L, HCFC1, WDR5 and RBBP5, as well as the facultative components BACC1, CHD8, E2F6, HSP70, INO80C, KANSL1, LAS1L, MAX, MCRS1, MGA, KAT8/MOF, PELP1, PHF20, PRP31, RING2, RUVB1/TIP49A, RUVB2/TIP49B, SENP3, TAF1, TAF4, TAF6, TAF7, TAF9 and TEX10.

It localises to the nucleus. Its subcellular location is the chromosome. The protein resides in the centromere. The protein localises to the kinetochore. It is found in the mitochondrion. It localises to the cytoplasm. Its subcellular location is the cytoskeleton. The protein resides in the spindle pole. In terms of biological role, non-catalytic component of the NSL histone acetyltransferase complex, a multiprotein complex that mediates histone H4 acetylation at 'Lys-5'- and 'Lys-8' (H4K5ac and H4K8ac) at transcription start sites and promotes transcription initiation. The NSL complex also acts as a regulator of gene expression in mitochondria. In addition to its role in transcription, KANSL1 also plays an essential role in spindle assembly during mitosis. Associates with microtubule ends and contributes to microtubule stability. This is KAT8 regulatory NSL complex subunit 1 (Kansl1) from Mus musculus (Mouse).